Consider the following 300-residue polypeptide: N-carbamoylputrescine amidase (300 aa).

The CN hydrolase domain maps to Val8–Leu266. Glu47 acts as the Proton acceptor in catalysis. The active-site Proton donor is Lys120. Cys157 acts as the Nucleophile in catalysis.

It belongs to the carbon-nitrogen hydrolase superfamily. As to quaternary structure, homooctamer.

The enzyme catalyses N-carbamoylputrescine + H2O + 2 H(+) = putrescine + NH4(+) + CO2. It participates in amine and polyamine biosynthesis; putrescine biosynthesis via agmatine pathway; putrescine from N-carbamoylputrescine (amidase route): step 1/1. In terms of biological role, involved in polyamine biosynthesis. This Solanum tuberosum (Potato) protein is N-carbamoylputrescine amidase (CPA).